A 132-amino-acid polypeptide reads, in one-letter code: Secreted RxLR effector protein BLR08 (132 aa).

A signal peptide spans 1–22 (MRHKCLLAMAVVASMAFYSVIS). Asn25 carries N-linked (GlcNAc...) asparagine glycosylation. The disordered stretch occupies residues 36 to 57 (NRRLRPRVEPTANELDKQSDVD). The short motif at 37-83 (RRLRPRVEPTANELDKQSDVDTKLEADRRLGYPGESGFMLEGELEER) is the RxLR-dEER element. The helical transmembrane segment at 111-131 (FFLGLFASVIGVSIISACYGI) threads the bilayer.

This sequence belongs to the RxLR effector family. As to quaternary structure, interacts with host transcription factor NAC069.

The protein resides in the secreted. Its subcellular location is the host endoplasmic reticulum membrane. Its function is as follows. Secreted effector that inhibits stress-induced relocalization of the transcription factor NAC069 to the nucleus, thus affecting its broad role in abiotic and biotic stress responses. The sequence is that of Secreted RxLR effector protein BLR08 from Bremia lactucae (Lettuce downy mildew).